A 323-amino-acid chain; its full sequence is MFNFANFYQLIAQDTRLQPWLNVLPQQLTDWQNAEHGDFDRWLRALNKIPQGVPDQVDLKNSVTIGSSTPFHTGELKKLESLLKTFHPWRKGPYTVHDIHIDTEWRSDWKWDRVLPHISPLKNRSVLDVGCGNGYHMWRMLGEGARLTVGIDPSHLFLVQFEAIRKLMGDDQRAHLLPLGIEQLPKLEAYDTVFSMGVLYHRRSPLDHLIQLKDQLVSGGELVLETLVIEGDENAVLVPVDRYAQMRNVYFFPSARALKRWLEQVGFEDVRIVDENVTTIGEQRTTDWMTHNSLPDYLDPNDPSKTVEGHPAPRRAILVATKP.

Carboxy-S-adenosyl-L-methionine contacts are provided by residues Lys91, Trp105, Lys110, Gly130, 152-154 (DPS), 181-182 (IE), Met196, Tyr200, and Arg315.

The protein belongs to the class I-like SAM-binding methyltransferase superfamily. CmoB family. In terms of assembly, homotetramer.

It carries out the reaction carboxy-S-adenosyl-L-methionine + 5-hydroxyuridine(34) in tRNA = 5-carboxymethoxyuridine(34) in tRNA + S-adenosyl-L-homocysteine + H(+). In terms of biological role, catalyzes carboxymethyl transfer from carboxy-S-adenosyl-L-methionine (Cx-SAM) to 5-hydroxyuridine (ho5U) to form 5-carboxymethoxyuridine (cmo5U) at position 34 in tRNAs. The polypeptide is tRNA U34 carboxymethyltransferase (Vibrio atlanticus (strain LGP32) (Vibrio splendidus (strain Mel32))).